A 364-amino-acid chain; its full sequence is Anthranilate phosphoribosyltransferase (364 aa).

Residues G101, 104–105 (GD), T109, 111–114 (NLST), 129–137 (KHGNRAASS), and G141 each bind 5-phospho-alpha-D-ribose 1-diphosphate. Residue G101 participates in anthranilate binding. Mg(2+) is bound at residue S113. An anthranilate-binding site is contributed by N132. Anthranilate is bound at residue R187. Mg(2+) is bound by residues D245 and E246.

Belongs to the anthranilate phosphoribosyltransferase family. As to quaternary structure, homodimer. It depends on Mg(2+) as a cofactor.

It catalyses the reaction N-(5-phospho-beta-D-ribosyl)anthranilate + diphosphate = 5-phospho-alpha-D-ribose 1-diphosphate + anthranilate. The protein operates within amino-acid biosynthesis; L-tryptophan biosynthesis; L-tryptophan from chorismate: step 2/5. In terms of biological role, catalyzes the transfer of the phosphoribosyl group of 5-phosphorylribose-1-pyrophosphate (PRPP) to anthranilate to yield N-(5'-phosphoribosyl)-anthranilate (PRA). In Mycolicibacterium gilvum (strain PYR-GCK) (Mycobacterium gilvum (strain PYR-GCK)), this protein is Anthranilate phosphoribosyltransferase.